Consider the following 180-residue polypeptide: Probable chorismate pyruvate-lyase (180 aa).

Residues arginine 73, leucine 111, and glutamate 170 each contribute to the substrate site.

It belongs to the UbiC family.

Its subcellular location is the cytoplasm. It carries out the reaction chorismate = 4-hydroxybenzoate + pyruvate. Its pathway is cofactor biosynthesis; ubiquinone biosynthesis. Removes the pyruvyl group from chorismate, with concomitant aromatization of the ring, to provide 4-hydroxybenzoate (4HB) for the ubiquinone pathway. In Nitrosospira multiformis (strain ATCC 25196 / NCIMB 11849 / C 71), this protein is Probable chorismate pyruvate-lyase.